Here is a 1376-residue protein sequence, read N- to C-terminus: Ubiquitin carboxyl-terminal hydrolase 47 (1376 aa).

The residue at position 122 (lysine 122) is an N6-acetyllysine. In terms of domain architecture, USP spans 188 to 564; it reads VGLVNQAMTC…NAYMLIYRLK (377 aa). Cysteine 197 serves as the catalytic Nucleophile. A disordered region spans residues 426 to 452; that stretch reads EKSPQTESCTDSGAENEGSCHSDQMSN. Over residues 430 to 452 the composition is skewed to polar residues; the sequence is QTESCTDSGAENEGSCHSDQMSN. The active-site Proton acceptor is the histidine 503. Position 832 is a phosphoserine (serine 832). Disordered regions lie at residues 835 to 863, 880 to 971, and 985 to 1025; these read SYSK…KGPA, LKSL…SSDT, and GLDS…ESGK. The span at 882–900 shows a compositional bias: low complexity; sequence SLSLQQQQQDGDNGDSSKS. A phosphoserine mark is found at serine 911 and serine 934. Positions 930-939 are enriched in polar residues; sequence HIQTSDPENF. The span at 941 to 951 shows a compositional bias: basic and acidic residues; that stretch reads SEERSDSDVNN. Over residues 954–970 the composition is skewed to low complexity; it reads STSSVDSDILSSSHSSD. Over residues 998–1007 the composition is skewed to basic and acidic residues; it reads KANEGKKETW. The span at 1008 to 1021 shows a compositional bias: acidic residues; the sequence is DTAEEDSGTDSEYD. Serine 1014 bears the Phosphoserine mark. At threonine 1016 the chain carries Phosphothreonine. Serine 1018 carries the post-translational modification Phosphoserine.

Belongs to the peptidase C19 family. USP47 subfamily. As to quaternary structure, interacts with BTRC and FBXW11. Interacts with POLB.

Its subcellular location is the cytoplasm. It catalyses the reaction Thiol-dependent hydrolysis of ester, thioester, amide, peptide and isopeptide bonds formed by the C-terminal Gly of ubiquitin (a 76-residue protein attached to proteins as an intracellular targeting signal).. Functionally, ubiquitin-specific protease that specifically deubiquitinates monoubiquitinated DNA polymerase beta (POLB), stabilizing POLB thereby playing a role in base-excision repair (BER). Acts as a regulator of cell growth and genome integrity. May also indirectly regulate CDC25A expression at a transcriptional level. The sequence is that of Ubiquitin carboxyl-terminal hydrolase 47 (Usp47) from Mus musculus (Mouse).